Here is a 387-residue protein sequence, read N- to C-terminus: TPR repeat-containing protein SYNPCC7002_A0425 (387 aa).

9 TPR repeats span residues 63-96 (LNAL…EANN), 97-130 (ARIH…EDDN), 132-164 (EFFN…QPNN), 166-198 (AYSL…DSNN), 200-232 (MALQ…RPND), 233-266 (AELR…STRD), 267-300 (SAMQ…DPQS), 302-334 (EAFA…SPTD), and 336-368 (AAFY…YQQR).

In Picosynechococcus sp. (strain ATCC 27264 / PCC 7002 / PR-6) (Agmenellum quadruplicatum), this protein is TPR repeat-containing protein SYNPCC7002_A0425.